The primary structure comprises 444 residues: Docking protein 3 (444 aa).

One can recognise a PH domain in the interval 7 to 123; sequence PVKDGLLYQQ…WMDPICQLAF (117 aa). Residues 47–66 are disordered; it reads DVRDGGLGPGGDRPAGPGRR. At Ser-138 the chain carries Phosphoserine. Positions 157–261 constitute an IRS-type PTB domain; the sequence is EVAEFPVVVQ…ARQRERLPEL (105 aa). 3 positions are modified to phosphoserine: Ser-274, Ser-308, and Ser-314. Tyr-325 is subject to Phosphotyrosine. Positions 354–390 are disordered; that stretch reads GLSNGGPEAQEGPPGGRSPLGSPIYHNSEELSWPGSA. Positions 358 to 376 are enriched in low complexity; the sequence is GGPEAQEGPPGGRSPLGSP. The residue at position 371 (Ser-371) is a Phosphoserine.

The protein belongs to the DOK family. Type A subfamily. As to quaternary structure, on tyrosine phosphorylation, interacts with CSK and INPP5D/SHIP1 via their SH2 domains. Binds ABL1 through the PTB domain and in a kinase-dependent manner. Does not interact with RasGAP. Post-translationally, constitutively tyrosine-phosphorylated. In terms of processing, on IL2 stimulation, phosphorylated on C-terminal tyrosine residues possibly by Src kinases. Can also be phosphorylated by ABL1 kinase.

It is found in the cytoplasm. Its subcellular location is the cell membrane. Functionally, DOK proteins are enzymatically inert adaptor or scaffolding proteins. They provide a docking platform for the assembly of multimolecular signaling complexes. DOK3 is a negative regulator of JNK signaling in B-cells through interaction with INPP5D/SHIP1. May modulate ABL1 function. In Rattus norvegicus (Rat), this protein is Docking protein 3 (Dok3).